Consider the following 379-residue polypeptide: Succinyl-diaminopimelate desuccinylase (379 aa).

H70 contacts Zn(2+). D72 is an active-site residue. D103 provides a ligand contact to Zn(2+). The Proton acceptor role is filled by E137. Zn(2+) is bound by residues E138, E166, and H352.

This sequence belongs to the peptidase M20A family. DapE subfamily. Homodimer. It depends on Zn(2+) as a cofactor. Co(2+) is required as a cofactor.

The catalysed reaction is N-succinyl-(2S,6S)-2,6-diaminopimelate + H2O = (2S,6S)-2,6-diaminopimelate + succinate. The protein operates within amino-acid biosynthesis; L-lysine biosynthesis via DAP pathway; LL-2,6-diaminopimelate from (S)-tetrahydrodipicolinate (succinylase route): step 3/3. Its function is as follows. Catalyzes the hydrolysis of N-succinyl-L,L-diaminopimelic acid (SDAP), forming succinate and LL-2,6-diaminopimelate (DAP), an intermediate involved in the bacterial biosynthesis of lysine and meso-diaminopimelic acid, an essential component of bacterial cell walls. The protein is Succinyl-diaminopimelate desuccinylase of Burkholderia multivorans (strain ATCC 17616 / 249).